The chain runs to 125 residues: Small ribosomal subunit protein bS6 (125 aa).

Belongs to the bacterial ribosomal protein bS6 family.

Functionally, binds together with bS18 to 16S ribosomal RNA. This chain is Small ribosomal subunit protein bS6 (rpsF), found in Campylobacter jejuni subsp. jejuni serotype O:2 (strain ATCC 700819 / NCTC 11168).